The primary structure comprises 401 residues: Homoserine O-acetyltransferase (401 aa).

Positions 37-358 constitute an AB hydrolase-1 domain; that stretch reads NAVLVCHALT…HGHDAFLVEP (322 aa). Serine 146 acts as the Nucleophile in catalysis. Arginine 215 lines the substrate pocket. Catalysis depends on residues aspartate 318 and histidine 351. Aspartate 352 contacts substrate.

It belongs to the AB hydrolase superfamily. MetX family. As to quaternary structure, homodimer.

Its subcellular location is the cytoplasm. It catalyses the reaction L-homoserine + acetyl-CoA = O-acetyl-L-homoserine + CoA. It functions in the pathway amino-acid biosynthesis; L-methionine biosynthesis via de novo pathway; O-acetyl-L-homoserine from L-homoserine: step 1/1. Transfers an acetyl group from acetyl-CoA to L-homoserine, forming acetyl-L-homoserine. The chain is Homoserine O-acetyltransferase from Natronomonas pharaonis (strain ATCC 35678 / DSM 2160 / CIP 103997 / JCM 8858 / NBRC 14720 / NCIMB 2260 / Gabara) (Halobacterium pharaonis).